We begin with the raw amino-acid sequence, 595 residues long: Aspartate--tRNA ligase (595 aa).

An L-aspartate-binding site is contributed by Glu-173. The aspartate stretch occupies residues 197-200 (QLFK). Arg-219 lines the L-aspartate pocket. ATP-binding positions include 219-221 (RDE) and Gln-228. Residue His-449 participates in L-aspartate binding. Glu-483 lines the ATP pocket. An L-aspartate-binding site is contributed by Arg-490. Residue 535 to 538 (GLDR) participates in ATP binding.

This sequence belongs to the class-II aminoacyl-tRNA synthetase family. Type 1 subfamily. Homodimer.

The protein localises to the cytoplasm. The catalysed reaction is tRNA(Asp) + L-aspartate + ATP = L-aspartyl-tRNA(Asp) + AMP + diphosphate. In terms of biological role, catalyzes the attachment of L-aspartate to tRNA(Asp) in a two-step reaction: L-aspartate is first activated by ATP to form Asp-AMP and then transferred to the acceptor end of tRNA(Asp). This Shewanella woodyi (strain ATCC 51908 / MS32) protein is Aspartate--tRNA ligase.